Consider the following 229-residue polypeptide: Germin-like protein 12-1 (229 aa).

The first 22 residues, 1–22, serve as a signal peptide directing secretion; that stretch reads MASSNFFLPTALIALVATQAMA. An intrachain disulfide couples cysteine 32 to cysteine 47. Residues 62-217 form the Cupin type-1 domain; the sequence is ANLDKPMDTT…AFQVDKKAVD (156 aa). N-linked (GlcNAc...) asparagine glycosylation is present at asparagine 78. The Mn(2+) site is built by histidine 111, histidine 113, glutamate 118, and histidine 162.

It belongs to the germin family. As to quaternary structure, oligomer (believed to be a pentamer but probably hexamer).

It localises to the secreted. Its subcellular location is the extracellular space. The protein localises to the apoplast. Functionally, may play a role in plant defense. Probably has no oxalate oxidase activity even if the active site is conserved. This is Germin-like protein 12-1 from Oryza sativa subsp. japonica (Rice).